The following is a 73-amino-acid chain: Homeodomain-only protein (73 aa).

A DNA-binding region (homeobox; degenerate) is located at residues Ala-3 to Glu-62.

As to quaternary structure, interacts with serum response factor (SRF). Component of a large complex containing histone deacetylases such as HDAC2. Interacts with the acetylated forms of HSPA1A and HSPA1B. Interacts with HSPA8. In terms of tissue distribution, expressed in the embryonic and adult heart and in the adult brain, liver, lung, skeletal muscle, intestine and spleen. Throughout embryonic and postnatal development, it is expressed in the myocardium.

It localises to the nucleus. The protein localises to the cytoplasm. Atypical homeodomain protein which does not bind DNA and is required to modulate cardiac growth and development. Acts via its interaction with SRF, thereby modulating the expression of SRF-dependent cardiac-specific genes and cardiac development. Prevents SRF-dependent transcription either by inhibiting SRF binding to DNA or by recruiting histone deacetylase (HDAC) proteins that prevent transcription by SRF. Overexpression causes cardiac hypertrophy. Acts as a co-chaperone for HSPA1A and HSPA1B chaperone proteins and assists in chaperone-mediated protein refolding. The chain is Homeodomain-only protein (Hopx) from Mus musculus (Mouse).